Here is a 160-residue protein sequence, read N- to C-terminus: Nucleotide-binding protein PSHAa2277 (160 aa).

It belongs to the YajQ family.

Nucleotide-binding protein. In Pseudoalteromonas translucida (strain TAC 125), this protein is Nucleotide-binding protein PSHAa2277.